We begin with the raw amino-acid sequence, 380 residues long: tRNA-specific 2-thiouridylase MnmA (380 aa).

Residues 10 to 17 (AMSGGVDS) and Leu36 each bind ATP. The Nucleophile role is filled by Cys106. Cysteines 106 and 202 form a disulfide. Gly130 contacts ATP. The segment at 152-154 (KNQ) is interaction with tRNA. The active-site Cysteine persulfide intermediate is the Cys202. The tract at residues 308–309 (RY) is interaction with tRNA.

The protein belongs to the MnmA/TRMU family.

The protein localises to the cytoplasm. It carries out the reaction S-sulfanyl-L-cysteinyl-[protein] + uridine(34) in tRNA + AH2 + ATP = 2-thiouridine(34) in tRNA + L-cysteinyl-[protein] + A + AMP + diphosphate + H(+). Catalyzes the 2-thiolation of uridine at the wobble position (U34) of tRNA, leading to the formation of s(2)U34. The polypeptide is tRNA-specific 2-thiouridylase MnmA (Leptospira biflexa serovar Patoc (strain Patoc 1 / Ames)).